The sequence spans 189 residues: GTPase NRas (189 aa).

GTP-binding positions include 10–18 (GAGGVGKSA) and 29–30 (VD). The Effector region signature appears at 32–40 (YDPTIEDSY). GTP is bound at residue 57–61 (DTAGQ). Position 89 is a phosphoserine (Ser-89). A GTP-binding site is contributed by 116–119 (NKCD). The hypervariable region stretch occupies residues 166 to 185 (YRMKKLNSSDDGTQGCMGLP). Residue Lys-170 forms a Glycyl lysine isopeptide (Lys-Gly) (interchain with G-Cter in ubiquitin) linkage. Cys-181 carries the S-palmitoyl cysteine lipid modification. Cys-186 carries S-farnesyl cysteine lipidation. The propeptide at 187–189 (VVM) is removed in mature form.

This sequence belongs to the small GTPase superfamily. Ras family. In terms of assembly, interacts (active GTP-bound form preferentially) with RGS14. Interacts (active GTP-bound form) with RASSF7. Interacts (active GTP-bound form) with both SHOC2 and PP1c (all isoforms) to form a tertiary complex; SHOC2 and PP1c preferably bind M-Ras/MRAS, but they also bind K-Ras/KRAS, N-Ras/NRAS and H-Ras/HRAS. In terms of processing, palmitoylated by the ZDHHC9-GOLGA7 complex. Depalmitoylated by ABHD17A, ABHD17B and ABHD17C. A continuous cycle of de- and re-palmitoylation regulates rapid exchange between plasma membrane and Golgi. Acetylation at Lys-104 prevents interaction with guanine nucleotide exchange factors (GEFs). Post-translationally, ubiquitinated by the BCR(LZTR1) E3 ubiquitin ligase complex at Lys-170 in a non-degradative manner, leading to inhibit Ras signaling by decreasing Ras association with membranes. In terms of processing, phosphorylation at Ser-89 enhances NRAS association with its downstream effectors.

It localises to the cell membrane. The protein localises to the golgi apparatus membrane. The enzyme catalyses GTP + H2O = GDP + phosphate + H(+). With respect to regulation, alternates between an inactive form bound to GDP and an active form bound to GTP. Activated by a guanine nucleotide-exchange factor (GEF) and inactivated by a GTPase-activating protein (GAP). Ras proteins bind GDP/GTP and possess intrinsic GTPase activity. This is GTPase NRas (NRAS) from Pongo abelii (Sumatran orangutan).